Consider the following 203-residue polypeptide: Outer-membrane lipoprotein carrier protein (203 aa).

An N-terminal signal peptide occupies residues 1 to 21 (MKKMAIACALLSSVVASSVWA). The segment at 178–203 (QQNGAVDPSKFTFTPPQGVTIDDQRK) is disordered.

The protein belongs to the LolA family. Monomer.

The protein localises to the periplasm. Its function is as follows. Participates in the translocation of lipoproteins from the inner membrane to the outer membrane. Only forms a complex with a lipoprotein if the residue after the N-terminal Cys is not an aspartate (The Asp acts as a targeting signal to indicate that the lipoprotein should stay in the inner membrane). This is Outer-membrane lipoprotein carrier protein from Salmonella agona (strain SL483).